Consider the following 999-residue polypeptide: Probable basic-leucine zipper transcription factor N (999 aa).

2 stretches are compositionally biased toward low complexity: residues M1–Q79 and N88–N126. The disordered stretch occupies residues M1 to N126. 2 coiled-coil regions span residues Q148–M198 and G232–S282. A compositionally biased stretch (polar residues) spans E286–L302. Disordered stretches follow at residues E286–Q406, Q450–N533, and E601–Q620. Over residues S303 to N347 the composition is skewed to low complexity. Residues M348–Q406 are compositionally biased toward polar residues. Residues I423–Q451 are a coiled coil. Over residues Q450 to Q517 the composition is skewed to low complexity. The 64-residue stretch at E601 to L664 folds into the bZIP domain. The interval K602–R632 is basic motif. A leucine-zipper region spans residues I636 to L643. Disordered stretches follow at residues K665 to T711, Q779 to E807, and V870 to T899. Acidic residues predominate over residues S682–Q692. A coiled-coil region spans residues H921–L950.

The protein belongs to the bZIP family.

It localises to the nucleus. In terms of biological role, probable transcriptional regulator. The polypeptide is Probable basic-leucine zipper transcription factor N (bzpN) (Dictyostelium discoideum (Social amoeba)).